Reading from the N-terminus, the 285-residue chain is Elongation factor Ts (285 aa).

The segment at 82–85 is involved in Mg(2+) ion dislocation from EF-Tu; the sequence is TDFV.

Belongs to the EF-Ts family.

Its subcellular location is the cytoplasm. Functionally, associates with the EF-Tu.GDP complex and induces the exchange of GDP to GTP. It remains bound to the aminoacyl-tRNA.EF-Tu.GTP complex up to the GTP hydrolysis stage on the ribosome. The sequence is that of Elongation factor Ts from Sodalis glossinidius (strain morsitans).